The following is a 193-amino-acid chain: Holliday junction branch migration complex subunit RuvA (193 aa).

The tract at residues 1-64 (MIGRIAGTLI…EDAHLLYGFG (64 aa)) is domain I. The segment at 65–143 (TASERNTFRE…AELGHVPGTP (79 aa)) is domain II. Residues 144-151 (AVPDSAVD) form a flexible linker region. The segment at 151–193 (DVLNALLALGYSEKEAAAAIKQVPAGTGVSDGIKLALKALSKA) is domain III.

This sequence belongs to the RuvA family. Homotetramer. Forms an RuvA(8)-RuvB(12)-Holliday junction (HJ) complex. HJ DNA is sandwiched between 2 RuvA tetramers; dsDNA enters through RuvA and exits via RuvB. An RuvB hexamer assembles on each DNA strand where it exits the tetramer. Each RuvB hexamer is contacted by two RuvA subunits (via domain III) on 2 adjacent RuvB subunits; this complex drives branch migration. In the full resolvosome a probable DNA-RuvA(4)-RuvB(12)-RuvC(2) complex forms which resolves the HJ.

It localises to the cytoplasm. The RuvA-RuvB-RuvC complex processes Holliday junction (HJ) DNA during genetic recombination and DNA repair, while the RuvA-RuvB complex plays an important role in the rescue of blocked DNA replication forks via replication fork reversal (RFR). RuvA specifically binds to HJ cruciform DNA, conferring on it an open structure. The RuvB hexamer acts as an ATP-dependent pump, pulling dsDNA into and through the RuvAB complex. HJ branch migration allows RuvC to scan DNA until it finds its consensus sequence, where it cleaves and resolves the cruciform DNA. The sequence is that of Holliday junction branch migration complex subunit RuvA from Cupriavidus necator (strain ATCC 17699 / DSM 428 / KCTC 22496 / NCIMB 10442 / H16 / Stanier 337) (Ralstonia eutropha).